The following is a 174-amino-acid chain: RNA pyrophosphohydrolase (174 aa).

In terms of domain architecture, Nudix hydrolase spans 6 to 149 (GFRANVGIVI…KREVYRRAMK (144 aa)). Residues 38 to 59 (GGIDEGETAEQTMYRELYEEVG) carry the Nudix box motif.

It belongs to the Nudix hydrolase family. RppH subfamily. Requires a divalent metal cation as cofactor.

Its function is as follows. Accelerates the degradation of transcripts by removing pyrophosphate from the 5'-end of triphosphorylated RNA, leading to a more labile monophosphorylated state that can stimulate subsequent ribonuclease cleavage. This chain is RNA pyrophosphohydrolase, found in Pseudoalteromonas atlantica (strain T6c / ATCC BAA-1087).